The sequence spans 129 residues: Holo-[acyl-carrier-protein] synthase (129 aa).

Residues Asp-8 and Glu-58 each coordinate Mg(2+).

This sequence belongs to the P-Pant transferase superfamily. AcpS family. Requires Mg(2+) as cofactor.

Its subcellular location is the cytoplasm. The enzyme catalyses apo-[ACP] + CoA = holo-[ACP] + adenosine 3',5'-bisphosphate + H(+). Transfers the 4'-phosphopantetheine moiety from coenzyme A to a Ser of acyl-carrier-protein. In Acidithiobacillus ferrooxidans (strain ATCC 53993 / BNL-5-31) (Leptospirillum ferrooxidans (ATCC 53993)), this protein is Holo-[acyl-carrier-protein] synthase.